The following is a 907-amino-acid chain: Translation initiation factor IF-2 (907 aa).

The tract at residues 26-317 (DAGMKKSSSD…KPKSMQHGFD (292 aa)) is disordered. Composition is skewed to basic and acidic residues over residues 28–44 (GMKK…EKQK) and 101–248 (SAIE…DTDY). Over residues 299–308 (KGGRKGKLSK) the composition is skewed to basic residues. A tr-type G domain is found at 406 to 575 (PRAPVVTIMG…LLQAEVLELT (170 aa)). Positions 415–422 (GHVDHGKT) are G1. GTP is bound at residue 415 to 422 (GHVDHGKT). Residues 440–444 (GITQH) form a G2 region. Positions 461–464 (DTPG) are G3. GTP is bound by residues 461-465 (DTPGH) and 515-518 (NKID). The tract at residues 515-518 (NKID) is G4. A G5 region spans residues 551–553 (SAK).

Belongs to the TRAFAC class translation factor GTPase superfamily. Classic translation factor GTPase family. IF-2 subfamily.

The protein localises to the cytoplasm. Functionally, one of the essential components for the initiation of protein synthesis. Protects formylmethionyl-tRNA from spontaneous hydrolysis and promotes its binding to the 30S ribosomal subunits. Also involved in the hydrolysis of GTP during the formation of the 70S ribosomal complex. This Vibrio vulnificus (strain CMCP6) protein is Translation initiation factor IF-2.